We begin with the raw amino-acid sequence, 268 residues long: Taurine import ATP-binding protein TauB (268 aa).

The 233-residue stretch at 4–236 (LSIENISMRF…MGVNADLREV (233 aa)) folds into the ABC transporter domain. ATP is bound at residue 41–48 (GPSGCGKT).

This sequence belongs to the ABC transporter superfamily. Taurine importer (TC 3.A.1.17.1) family. The complex is composed of two ATP-binding proteins (TauB), two transmembrane proteins (TauC) and a solute-binding protein (TauA).

The protein localises to the cell inner membrane. It carries out the reaction taurine(out) + ATP + H2O = taurine(in) + ADP + phosphate + H(+). Functionally, part of the ABC transporter complex TauABC involved in taurine import. Responsible for energy coupling to the transport system. The polypeptide is Taurine import ATP-binding protein TauB (Ruegeria pomeroyi (strain ATCC 700808 / DSM 15171 / DSS-3) (Silicibacter pomeroyi)).